Consider the following 99-residue polypeptide: DNA-directed RNA polymerase subunit omega (99 aa).

Low complexity predominate over residues 1–10 (MSSTSAASAA). A disordered region spans residues 1–20 (MSSTSAASAAGQGALPAYDT).

The protein belongs to the RNA polymerase subunit omega family. As to quaternary structure, the RNAP catalytic core consists of 2 alpha, 1 beta, 1 beta' and 1 omega subunit. When a sigma factor is associated with the core the holoenzyme is formed, which can initiate transcription.

It catalyses the reaction RNA(n) + a ribonucleoside 5'-triphosphate = RNA(n+1) + diphosphate. Promotes RNA polymerase assembly. Latches the N- and C-terminal regions of the beta' subunit thereby facilitating its interaction with the beta and alpha subunits. This Rhodococcus erythropolis (strain PR4 / NBRC 100887) protein is DNA-directed RNA polymerase subunit omega.